A 153-amino-acid polypeptide reads, in one-letter code: Lysine-acyltransferase RtxC (153 aa).

His32 is a catalytic residue.

This sequence belongs to the RTX toxin acyltransferase family.

Its subcellular location is the cytoplasm. It carries out the reaction a fatty acyl-[ACP] + L-lysyl-[protein] = N(6)-(fatty acyl)-L-lysyl-[protein] + holo-[ACP] + H(+). In terms of biological role, catalyzes fatty acylation of the protoxin (RtxA) at internal lysine residues, thereby converting it to the active toxin. The protein is Lysine-acyltransferase RtxC (rtxC) of Vibrio cholerae serotype O1 (strain ATCC 39315 / El Tor Inaba N16961).